The following is a 123-amino-acid chain: MIQQESRLKVADNTGAKSLSVIRVLGGSNRRFGSLGDVVVASVKDAVPGSSAVKKGDVVKAVIVRSTKEVRRTDGSYIRFDDNAAVILRPDNDPRGTRIFGPVARELRDRKFTRIISLAPEVV.

Belongs to the universal ribosomal protein uL14 family. Part of the 50S ribosomal subunit. Forms a cluster with proteins L3 and L19. In the 70S ribosome, L14 and L19 interact and together make contacts with the 16S rRNA in bridges B5 and B8.

In terms of biological role, binds to 23S rRNA. Forms part of two intersubunit bridges in the 70S ribosome. This Tropheryma whipplei (strain TW08/27) (Whipple's bacillus) protein is Large ribosomal subunit protein uL14.